The following is a 230-amino-acid chain: Cytidylate kinase (230 aa).

12–20 (GPSGAGKGT) contributes to the ATP binding site.

Belongs to the cytidylate kinase family. Type 1 subfamily.

It localises to the cytoplasm. The enzyme catalyses CMP + ATP = CDP + ADP. It catalyses the reaction dCMP + ATP = dCDP + ADP. The protein is Cytidylate kinase of Shewanella sp. (strain MR-7).